Consider the following 109-residue polypeptide: uncharacterized protein (109 aa).

This is an uncharacterized protein from Mycobacterium tuberculosis (strain CDC 1551 / Oshkosh).